The following is a 366-amino-acid chain: MSGNTIGKLFTVTTFGESHGPALGAIVDGCPPGLALSEADLQRDLDRRRPGTSKFTTQRKEPDQVRILSGVFEGRTTGTPIGLLIENTDQRSKDYAEIARRFRPGHADYTYLQKYGIRDYRGGGRSSARETAMRVAAGGIARKYLRERLGVTVQGCLTQLGPIELGIKDWMAVDDNPFFCADPERVPDLESFMQDLRKAGNSIGAAVTVVARGCPPGLGEPVFDRLDADLAHALMSINAVKGVELGAGFASVMQHGSEHRDELTPEGFASNNAGGVLGGLSTGQDVVTRIALKPTSSIVVPGRTIDTEGEPVPVVTKGRHDPCVGIRAVPIAEAMVALTLMDHWLRHRAQCADVQPETPPIPAANR.

Arginine 48 is an NADP(+) binding site. FMN-binding positions include 125 to 127, 238 to 239, glycine 278, 293 to 297, and arginine 319; these read RSS, NA, and KPTSS.

The protein belongs to the chorismate synthase family. As to quaternary structure, homotetramer. It depends on FMNH2 as a cofactor.

It carries out the reaction 5-O-(1-carboxyvinyl)-3-phosphoshikimate = chorismate + phosphate. The protein operates within metabolic intermediate biosynthesis; chorismate biosynthesis; chorismate from D-erythrose 4-phosphate and phosphoenolpyruvate: step 7/7. Functionally, catalyzes the anti-1,4-elimination of the C-3 phosphate and the C-6 proR hydrogen from 5-enolpyruvylshikimate-3-phosphate (EPSP) to yield chorismate, which is the branch point compound that serves as the starting substrate for the three terminal pathways of aromatic amino acid biosynthesis. This reaction introduces a second double bond into the aromatic ring system. This is Chorismate synthase from Alkalilimnicola ehrlichii (strain ATCC BAA-1101 / DSM 17681 / MLHE-1).